The sequence spans 474 residues: UDP-N-acetylmuramate--L-alanine ligase (474 aa).

122 to 128 contacts ATP; that stretch reads GTHGKTT.

The protein belongs to the MurCDEF family.

Its subcellular location is the cytoplasm. The enzyme catalyses UDP-N-acetyl-alpha-D-muramate + L-alanine + ATP = UDP-N-acetyl-alpha-D-muramoyl-L-alanine + ADP + phosphate + H(+). The protein operates within cell wall biogenesis; peptidoglycan biosynthesis. Functionally, cell wall formation. The protein is UDP-N-acetylmuramate--L-alanine ligase of Saccharophagus degradans (strain 2-40 / ATCC 43961 / DSM 17024).